Here is a 479-residue protein sequence, read N- to C-terminus: Shugoshin (479 aa).

A coiled-coil region spans residues 36–76 (SLRIRSLESEVSNLLSENVSLREQIITLTQELERFEAARTL). Disordered regions lie at residues 109 to 145 (SRAV…GFLD), 220 to 247 (EHSL…QADT), and 263 to 479 (AKRK…SMPP). Over residues 123–132 (QSRESGPKEV) the composition is skewed to basic and acidic residues. The segment covering 270-286 (EDDESLFESSPSEDDEF) has biased composition (acidic residues). Polar residues-rich tracts occupy residues 290–303 (RPAQ…QNEH) and 318–328 (QSPTLSSQNDH). Composition is skewed to basic and acidic residues over residues 335-352 (PQSE…RVLE) and 379-388 (GYNEKSEKPL). Residues 400–411 (KNASPKKSSTRT) are compositionally biased toward polar residues.

It belongs to the shugoshin family.

The protein localises to the nucleus. It is found in the chromosome. Its subcellular location is the centromere. In terms of biological role, plays a central role in chromosome cohesion during cell division by preventing premature dissociation of cohesin complex from centromeres after prophase, when most of cohesin complex dissociates from chromosomes arms. The protein is Shugoshin (sgo1) of Emericella nidulans (strain FGSC A4 / ATCC 38163 / CBS 112.46 / NRRL 194 / M139) (Aspergillus nidulans).